The chain runs to 476 residues: ATP synthase subunit beta (476 aa).

154–161 provides a ligand contact to ATP; that stretch reads GGAGVGKT.

Belongs to the ATPase alpha/beta chains family. In terms of assembly, F-type ATPases have 2 components, CF(1) - the catalytic core - and CF(0) - the membrane proton channel. CF(1) has five subunits: alpha(3), beta(3), gamma(1), delta(1), epsilon(1). CF(0) has three main subunits: a(1), b(2) and c(9-12). The alpha and beta chains form an alternating ring which encloses part of the gamma chain. CF(1) is attached to CF(0) by a central stalk formed by the gamma and epsilon chains, while a peripheral stalk is formed by the delta and b chains.

It is found in the cell inner membrane. It catalyses the reaction ATP + H2O + 4 H(+)(in) = ADP + phosphate + 5 H(+)(out). In terms of biological role, produces ATP from ADP in the presence of a proton gradient across the membrane. The catalytic sites are hosted primarily by the beta subunits. The sequence is that of ATP synthase subunit beta from Nitrobacter winogradskyi (strain ATCC 25391 / DSM 10237 / CIP 104748 / NCIMB 11846 / Nb-255).